The sequence spans 212 residues: Ribosome biogenesis protein RLP7 (212 aa).

This sequence belongs to the universal ribosomal protein uL30 family.

Its subcellular location is the nucleus. It localises to the nucleolus. Functionally, involved in the biogenesis of the 60S ribosomal subunit. May act as a specificity factor that binds precursor rRNAs and tethers the enzymes that carry out the early 5' to 3' exonucleolytic reactions that generate the mature rRNAs. The chain is Ribosome biogenesis protein RLP7 (RLP7) from Cyberlindnera jadinii (Torula yeast).